Here is a 324-residue protein sequence, read N- to C-terminus: Disintegrin-like/cysteine-rich protein MPIII-3 (324 aa).

A signal peptide spans 1-20 (MIQVLLVIICLAVFPYQVSS). Residues 21 to 173 (IILESGNINN…DEDPKKCEFR (153 aa)) constitute a propeptide, or 174 (in a minor form). Residues 168–207 (KKCEFRRAGTECRPARSECDVAEYCTGQSAECPTDVFHSN) form the Disintegrin; truncated domain. Positions 179–192 (CRPARSECDVAEYC) are inhibits platelet aggregation. 9 disulfide bridges follow: C179-C199, C186-C218, C192-C199, C211-C223, C230-C280, C245-C287, C258-C268, C275-C312, and C306-C317. The short motif at 185–187 (ECD) is the D/ECD-tripeptide element. Ca(2+) is bound by residues D187 and E190. 2 residues coordinate Ca(2+): D202 and V203. N237 carries N-linked (GlcNAc...) asparagine glycosylation.

It belongs to the venom metalloproteinase (M12B) family. P-III subfamily. P-IIIe sub-subfamily. In terms of assembly, monomer. Is able to form a homodimer. Post-translationally, N-glycosylated. Exists in at least six differently N-glycosylated forms. The glycans likely have a stabilizing purpose. Cys-199 forms a disulfide bond with Cys-192 in 90% and with Cys-179 in 10% of the protein molecules; alternative disulfide bonds may have a major effect on the conformation of the protein. Expressed by the venom gland (at protein level). Expressed by the venom gland.

The protein resides in the secreted. Activity may be regulated by the intramolecular thiol-disulfide exchange or disulfide bond switching. Functionally, abolishes platelet aggregation induced by collagen, ADP (IC(50)=292 nM) and arachidonic-acid. The inhibition of collagen-induced platelet aggregation may be due to its ability to bind collagen and block the binding site on collagen for platelets and/or to its ability to bind to the platelet alpha-2/beta-1 collagen receptor (ITGA2/ITGB1) to block its interaction with collagen and hence prevent platelet stimulation. The inhibition of ADP- or arachidonic-acid-induced platelet aggregation may be due to it acting as an antagonist of the ADP receptors or thromboxane-prostanoid receptors of the platelets, respectively. Does not interact with integrins alpha-IIb (ITGA2B) or beta-3 (ITGB3) nor platelet glycoproteins VI (GP6) or IX (GP9) in vitro, however, the detection is dependent on experimental conditions and may happen in vivo. Able to bind to platelet glycoprotein Ib alpha chain (GP1BA) receptor in vitro, although this interaction may have pathologically only limited effect in vivo as it is not able to abolish the von Willebrand factor (vWF)-dependent platelet agglutination induced by ristocetin. Does not affect blood coagulation. The polypeptide is Disintegrin-like/cysteine-rich protein MPIII-3 (Vipera ammodytes ammodytes (Western sand viper)).